Reading from the N-terminus, the 440-residue chain is UDP-glycosyltransferase 87A1 (440 aa).

UDP-alpha-D-glucose-binding positions include Ser263, 312–314 (CDQ), 329–337 (HCGYNSTLE), and 351–354 (FWDQ).

Belongs to the UDP-glycosyltransferase family.

The polypeptide is UDP-glycosyltransferase 87A1 (UGT87A1) (Arabidopsis thaliana (Mouse-ear cress)).